The following is a 273-amino-acid chain: Tryptophan synthase alpha chain (273 aa).

Catalysis depends on proton acceptor residues Glu49 and Asp60.

The protein belongs to the TrpA family. As to quaternary structure, tetramer of two alpha and two beta chains.

The catalysed reaction is (1S,2R)-1-C-(indol-3-yl)glycerol 3-phosphate + L-serine = D-glyceraldehyde 3-phosphate + L-tryptophan + H2O. Its pathway is amino-acid biosynthesis; L-tryptophan biosynthesis; L-tryptophan from chorismate: step 5/5. In terms of biological role, the alpha subunit is responsible for the aldol cleavage of indoleglycerol phosphate to indole and glyceraldehyde 3-phosphate. This is Tryptophan synthase alpha chain from Halorhodospira halophila (strain DSM 244 / SL1) (Ectothiorhodospira halophila (strain DSM 244 / SL1)).